A 278-amino-acid chain; its full sequence is Dermonecrotic toxin LlSicTox-alphaIII3iii (278 aa).

Residue His-5 is part of the active site. Residues Glu-25 and Asp-27 each contribute to the Mg(2+) site. The active-site Nucleophile is His-40. Cysteines 44 and 50 form a disulfide. Mg(2+) is bound at residue Asp-84.

Belongs to the arthropod phospholipase D family. Class I subfamily. Requires Mg(2+) as cofactor. In terms of tissue distribution, expressed by the venom gland.

The protein resides in the secreted. It carries out the reaction an N-(acyl)-sphingosylphosphocholine = an N-(acyl)-sphingosyl-1,3-cyclic phosphate + choline. It catalyses the reaction an N-(acyl)-sphingosylphosphoethanolamine = an N-(acyl)-sphingosyl-1,3-cyclic phosphate + ethanolamine. The catalysed reaction is a 1-acyl-sn-glycero-3-phosphocholine = a 1-acyl-sn-glycero-2,3-cyclic phosphate + choline. The enzyme catalyses a 1-acyl-sn-glycero-3-phosphoethanolamine = a 1-acyl-sn-glycero-2,3-cyclic phosphate + ethanolamine. Dermonecrotic toxins cleave the phosphodiester linkage between the phosphate and headgroup of certain phospholipids (sphingolipid and lysolipid substrates), forming an alcohol (often choline) and a cyclic phosphate. This toxin acts on sphingomyelin (SM). It may also act on ceramide phosphoethanolamine (CPE), lysophosphatidylcholine (LPC) and lysophosphatidylethanolamine (LPE), but not on lysophosphatidylserine (LPS), and lysophosphatidylglycerol (LPG). It acts by transphosphatidylation, releasing exclusively cyclic phosphate products as second products. Induces dermonecrosis, hemolysis, increased vascular permeability, edema, inflammatory response, and platelet aggregation. The polypeptide is Dermonecrotic toxin LlSicTox-alphaIII3iii (Loxosceles laeta (South American recluse spider)).